Here is a 157-residue protein sequence, read N- to C-terminus: Small ribosomal subunit protein uS7 (157 aa).

This sequence belongs to the universal ribosomal protein uS7 family. In terms of assembly, part of the 30S ribosomal subunit. Contacts proteins S9 and S11.

In terms of biological role, one of the primary rRNA binding proteins, it binds directly to 16S rRNA where it nucleates assembly of the head domain of the 30S subunit. Is located at the subunit interface close to the decoding center, probably blocks exit of the E-site tRNA. This Leptospira interrogans serogroup Icterohaemorrhagiae serovar copenhageni (strain Fiocruz L1-130) protein is Small ribosomal subunit protein uS7.